Reading from the N-terminus, the 209-residue chain is Thiamine-phosphate synthase (209 aa).

4-amino-2-methyl-5-(diphosphooxymethyl)pyrimidine is bound by residues 38 to 42 (QYRDK) and asparagine 70. 2 residues coordinate Mg(2+): aspartate 71 and aspartate 89. Residue threonine 108 participates in 4-amino-2-methyl-5-(diphosphooxymethyl)pyrimidine binding. A 2-[(2R,5Z)-2-carboxy-4-methylthiazol-5(2H)-ylidene]ethyl phosphate-binding site is contributed by 135–137 (SNT). Lysine 138 provides a ligand contact to 4-amino-2-methyl-5-(diphosphooxymethyl)pyrimidine. 2-[(2R,5Z)-2-carboxy-4-methylthiazol-5(2H)-ylidene]ethyl phosphate is bound at residue glycine 165.

The protein belongs to the thiamine-phosphate synthase family. The cofactor is Mg(2+).

It carries out the reaction 2-[(2R,5Z)-2-carboxy-4-methylthiazol-5(2H)-ylidene]ethyl phosphate + 4-amino-2-methyl-5-(diphosphooxymethyl)pyrimidine + 2 H(+) = thiamine phosphate + CO2 + diphosphate. It catalyses the reaction 2-(2-carboxy-4-methylthiazol-5-yl)ethyl phosphate + 4-amino-2-methyl-5-(diphosphooxymethyl)pyrimidine + 2 H(+) = thiamine phosphate + CO2 + diphosphate. The catalysed reaction is 4-methyl-5-(2-phosphooxyethyl)-thiazole + 4-amino-2-methyl-5-(diphosphooxymethyl)pyrimidine + H(+) = thiamine phosphate + diphosphate. It participates in cofactor biosynthesis; thiamine diphosphate biosynthesis; thiamine phosphate from 4-amino-2-methyl-5-diphosphomethylpyrimidine and 4-methyl-5-(2-phosphoethyl)-thiazole: step 1/1. In terms of biological role, condenses 4-methyl-5-(beta-hydroxyethyl)thiazole monophosphate (THZ-P) and 2-methyl-4-amino-5-hydroxymethyl pyrimidine pyrophosphate (HMP-PP) to form thiamine monophosphate (TMP). The protein is Thiamine-phosphate synthase of Ectopseudomonas mendocina (strain ymp) (Pseudomonas mendocina).